The sequence spans 268 residues: Nickel import ATP-binding protein NikE (268 aa).

The region spanning 4–252 (LNVSGLSHHY…SSDAGRVLQN (249 aa)) is the ABC transporter domain. Residue 45 to 52 (GRSGCGKS) coordinates ATP.

It belongs to the ABC transporter superfamily. Nickel importer (TC 3.A.1.5.3) family. In terms of assembly, the complex is composed of two ATP-binding proteins (NikD and NikE), two transmembrane proteins (NikB and NikC) and a solute-binding protein (NikA).

The protein resides in the cell inner membrane. It catalyses the reaction Ni(2+)(out) + ATP + H2O = Ni(2+)(in) + ADP + phosphate + H(+). Part of the ABC transporter complex NikABCDE involved in nickel import. Responsible for energy coupling to the transport system. This is Nickel import ATP-binding protein NikE from Shigella sonnei (strain Ss046).